Consider the following 514-residue polypeptide: Nucleus accumbens-associated protein 1 (514 aa).

A BTB domain is found at 30-94; sequence CDVSVVVKGH…CYTGRLSMNM (65 aa). Lys-167 participates in a covalent cross-link: Glycyl lysine isopeptide (Lys-Gly) (interchain with G-Cter in SUMO1); alternate. Lys-167 participates in a covalent cross-link: Glycyl lysine isopeptide (Lys-Gly) (interchain with G-Cter in SUMO2); alternate. A Glycyl lysine isopeptide (Lys-Gly) (interchain with G-Cter in SUMO2) cross-link involves residue Lys-182. 2 disordered regions span residues 183–205 and 242–279; these read RLWD…RKMA and PSMS…EEGT. Ser-187 carries the post-translational modification Phosphoserine. A compositionally biased stretch (polar residues) spans 242 to 251; it reads PSMSERTSPG. Ser-245 is modified (phosphoserine; by PKC). A compositionally biased stretch (low complexity) spans 252-264; it reads TSSAYTSDSPSSY. Over residues 267-279 the composition is skewed to acidic residues; that stretch reads EEDEEEDAGEEGT. Glycyl lysine isopeptide (Lys-Gly) (interchain with G-Cter in SUMO2) cross-links involve residues Lys-304, Lys-438, Lys-466, and Lys-485. In terms of domain architecture, BEN spans 360–457; sequence GTNVYITRAQ…DMCTNARRVV (98 aa). Phosphoserine occurs at positions 492 and 496.

Homooligomer; mediated by the BTB domain. Interacts with HDAC3 and HDAC4. Interacts (via BTB domain) with CUL3, PSMD7 and RCOR1. In terms of tissue distribution, ubiquitously expressed with higher expression in the brain, kidney and liver, and at lower levels in heart, lung and testes.

It is found in the nucleus. The protein resides in the cytoplasm. Its function is as follows. Functions as a transcriptional repressor. Seems to function as a transcriptional corepressor in neuronal cells through recruitment of HDAC3 and HDAC4. Contributes to tumor progression, and tumor cell proliferation and survival. This may be mediated at least in part through repressing transcriptional activity of GADD45GIP1. Required for recruiting the proteasome from the nucleus to the cytoplasm and dendritic spines. Involved in the acute behavioral and neurological responses to cocaine and amphetamines. The protein is Nucleus accumbens-associated protein 1 (Nacc1) of Mus musculus (Mouse).